The primary structure comprises 727 residues: 1,4-alpha-glucan branching enzyme GlgB (727 aa).

The active-site Nucleophile is the Asp-405. The Proton donor role is filled by Glu-458.

It belongs to the glycosyl hydrolase 13 family. GlgB subfamily. As to quaternary structure, monomer.

It carries out the reaction Transfers a segment of a (1-&gt;4)-alpha-D-glucan chain to a primary hydroxy group in a similar glucan chain.. The protein operates within glycan biosynthesis; glycogen biosynthesis. Functionally, catalyzes the formation of the alpha-1,6-glucosidic linkages in glycogen by scission of a 1,4-alpha-linked oligosaccharide from growing alpha-1,4-glucan chains and the subsequent attachment of the oligosaccharide to the alpha-1,6 position. The sequence is that of 1,4-alpha-glucan branching enzyme GlgB from Yersinia pseudotuberculosis serotype I (strain IP32953).